The following is a 124-amino-acid chain: MPLYEHVFLARQDLAQTQVDGLAATATSIIEEKSGKVVKTEIWGLRNLAYRIQKNRKAYYIMLEIDAPADAIQELERQMALNEDVIRYMTVRVDAHEQGPSAMMRRGDRDRSNRSDRRRDRDAA.

The segment at 97 to 124 is disordered; that stretch reads EQGPSAMMRRGDRDRSNRSDRRRDRDAA. Residues 105–124 show a composition bias toward basic and acidic residues; it reads RRGDRDRSNRSDRRRDRDAA.

The protein belongs to the bacterial ribosomal protein bS6 family.

Binds together with bS18 to 16S ribosomal RNA. The chain is Small ribosomal subunit protein bS6 from Zymomonas mobilis subsp. mobilis (strain ATCC 31821 / ZM4 / CP4).